A 308-amino-acid polypeptide reads, in one-letter code: Putative acetyl-hydrolase LipR (308 aa).

An N-terminal signal peptide occupies residues 1-40 (MNLRKNVIRSVLRGARPLFASRRLGIAGRRVLLATLTAGA). Residues 76 to 78 (HGG) carry the Involved in the stabilization of the negatively charged intermediate by the formation of the oxyanion hole motif. Catalysis depends on residues Ser146, Asp239, and His269.

This sequence belongs to the 'GDXG' lipolytic enzyme family.

Its function is as follows. Required for maintaining the appropriate mycolic acid composition and permeability of the envelope on its exposure to acidic pH. The protein is Putative acetyl-hydrolase LipR (lipR) of Mycobacterium tuberculosis (strain ATCC 25618 / H37Rv).